Consider the following 575-residue polypeptide: Phosphoenolpyruvate-protein phosphotransferase (575 aa).

The active-site Tele-phosphohistidine intermediate is the H189. Residues R296 and R332 each contribute to the phosphoenolpyruvate site. Positions 431 and 455 each coordinate Mg(2+). Phosphoenolpyruvate is bound by residues 454-455 (ND) and R465. The active-site Proton donor is the C502.

The protein belongs to the PEP-utilizing enzyme family. In terms of assembly, homodimer. Mg(2+) is required as a cofactor.

Its subcellular location is the cytoplasm. The catalysed reaction is L-histidyl-[protein] + phosphoenolpyruvate = N(pros)-phospho-L-histidyl-[protein] + pyruvate. Its function is as follows. General (non sugar-specific) component of the phosphoenolpyruvate-dependent sugar phosphotransferase system (sugar PTS). This major carbohydrate active-transport system catalyzes the phosphorylation of incoming sugar substrates concomitantly with their translocation across the cell membrane. Enzyme I transfers the phosphoryl group from phosphoenolpyruvate (PEP) to the phosphoryl carrier protein (HPr). The sequence is that of Phosphoenolpyruvate-protein phosphotransferase (ptsI) from Haemophilus influenzae (strain ATCC 51907 / DSM 11121 / KW20 / Rd).